A 287-amino-acid chain; its full sequence is Uroplakin-3a (287 aa).

The N-terminal stretch at 1–18 (MPPLWVVLALGCLRLGSG) is a signal peptide. At 19-207 (VNLQPQLASV…DTWPGRRSGG (189 aa)) the chain is on the lumenal side. 3 N-linked (GlcNAc...) asparagine glycosylation sites follow: N74, N139, and N170. Residues 208–235 (MIVITSILGSLPFFLLIGFAGAIVLSLV) traverse the membrane as a helical segment. Topologically, residues 236–287 (DRGDADGATSHDSQITQEAVPKSLGTSEPSYTSVNRGPSLDRAEVYASKLQD) are cytoplasmic. Positions 243–274 (ATSHDSQITQEAVPKSLGTSEPSYTSVNRGPS) are disordered. The segment covering 259 to 271 (LGTSEPSYTSVNR) has biased composition (polar residues).

Belongs to the uroplakin-3 family. Heterodimer with uroplakin-1B (UPK1B). Bladder epithelium.

It is found in the endoplasmic reticulum membrane. Its function is as follows. Component of the asymmetric unit membrane (AUM); a highly specialized biomembrane elaborated by terminally differentiated urothelial cells. May play an important role in AUM-cytoskeleton interaction in terminally differentiated urothelial cells. It also contributes to the formation of urothelial glycocalyx which may play an important role in preventing bacterial adherence. The sequence is that of Uroplakin-3a (UPK3A) from Bos taurus (Bovine).